The chain runs to 473 residues: Phosphatidylserine synthase 2 (473 aa).

A disordered region spans residues 1-25 (MRRGERRVAGGSGSESPLLKGRRST). Topologically, residues 1–40 (MRRGERRVAGGSGSESPLLKGRRSTESEVYDDGTNTFFWR) are cytoplasmic. Phosphoserine is present on residues Ser12, Ser14, and Ser16. The chain crosses the membrane as a helical span at residues 41–61 (AHTLTVLFILTCALGYVTLLE). Topologically, residues 62–74 (ETPQDTAYNTKRG) are lumenal. A helical membrane pass occupies residues 75–95 (IVASILVFLCFGVTQAKDGPF). Residues 96–104 (SRPHPAYWR) are Cytoplasmic-facing. A helical membrane pass occupies residues 105 to 125 (FWLCVSVVYELFLIFILFQTV). The Lumenal portion of the chain corresponds to 126 to 291 (QDGRQFLKYV…EWKPASSLHR (166 aa)). Asn159 carries N-linked (GlcNAc...) asparagine glycosylation. Residues 292 to 312 (WLAVCGIILVFLLAELNTFYL) traverse the membrane as a helical segment. Residue Lys313 is a topological domain, cytoplasmic. A helical membrane pass occupies residues 314–334 (FVLWMPPEHYLVLLRLVFFVN). The Lumenal segment spans residues 335 to 354 (VGGVAMREIYDFMDELKPHR). Residues 355 to 375 (KLGQQAWLVAAITVTELLIVV) traverse the membrane as a helical segment. The Cytoplasmic portion of the chain corresponds to 376-381 (KYDPHT). Residues 382 to 402 (LTLSLPFYISQCWTLGSILVL) form a helical membrane-spanning segment. The Lumenal portion of the chain corresponds to 403–473 (TWTVWRFFLR…TAEEGTSAAS (71 aa)). The interval 422 to 473 (RRQKQQSHQARAVNNRDGHPGPDDDLLGTGTAEEEGTTNDGVTAEEGTSAAS) is disordered.

This sequence belongs to the phosphatidyl serine synthase family. In terms of tissue distribution, highly expressed in testis. Detected at lower levels in kidney and heart.

It is found in the endoplasmic reticulum membrane. It localises to the membrane. It carries out the reaction a 1,2-diacyl-sn-glycero-3-phosphoethanolamine + L-serine = a 1,2-diacyl-sn-glycero-3-phospho-L-serine + ethanolamine. It catalyses the reaction 1-hexadecanoyl-2-(9Z-octadecenoyl)-sn-glycero-3-phosphoethanolamine + L-serine = 1-hexadecanoyl-2-(9Z-octadecenoyl)-sn-glycero-3-phospho-L-serine + ethanolamine. The catalysed reaction is 1-hexadecanoyl-2-(4Z,7Z,10Z,13Z,16Z,19Z-docosahexaenoyl)-sn-glycero-3-phosphoethanolamine + L-serine = 1-hexadecanoyl-2-(4Z,7Z,10Z,13Z,16Z,19Z-docosahexaenoyl)-sn-glycero-3-phosphoserine + ethanolamine. The enzyme catalyses 1-octadecanoyl-2-(5Z,8Z,11Z,14Z)-eicosatetraenoyl-sn-glycero-3-phosphoethanolamine + L-serine = 1-octadecanoyl-2-(5Z,8Z,11Z,14Z)-eicosatetraenoyl-sn-glycero-3-phosphoserine + ethanolamine. It carries out the reaction 1-octadecanoyl-2-(4Z,7Z,10Z,13Z,16Z,19Z-docosahexaenoyl)-sn-glycero-3-phosphoethanolamine + L-serine = 1-octadecanoyl-2-(4Z,7Z,10Z,13Z,16Z,19Z-docosahexaenoyl)-sn-glycero-3-phosphoserine + ethanolamine. It catalyses the reaction 1-(1Z-octadecenyl)-2-(4Z,7Z,10Z,13Z,16Z,19Z-docosahexaenoyl)-sn-glycero-3-phosphoethanolamine + L-serine = 1-(1Z-octadecenyl)-2-(4Z,7Z,10Z,13Z,16Z,19Z-docosahexaenoyl)-sn-glycero-3-phospho-L-serine + ethanolamine. The catalysed reaction is 1-octadecanoyl-2-(9Z-octadecenoyl)-sn-glycero-3-phosphoethanolamine + L-serine = 1-octadecanoyl-2-(9Z-octadecenoyl)-sn-glycero-3-phospho-L-serine + ethanolamine. The enzyme catalyses 1-(1Z-octadecenyl)-2-(9Z-octadecenoyl)-sn-glycero-3-phosphoethanolamine + L-serine = 1-(1Z-octadecenyl)-2-(9Z-octadecenoyl)-sn-glycero-3-phospho-L-serine + ethanolamine. It carries out the reaction 1-(1Z-octadecenyl)-2-(5Z,8Z,11Z,14Z- eicosatetraenoyl)-sn-glycero-3-phosphoethanolamine + L-serine = 1-(1Z-octadecenyl)-2-(5Z,8Z,11Z,14Z-eicosatetraenoyl)-sn-glycero-3-phospho-L-serine + ethanolamine. Its pathway is phospholipid metabolism; phosphatidylserine biosynthesis. Its activity is regulated as follows. Almost complete inhibition by ethanolamine in both the mitochondria-associated membrane (MAM) and endoplasmic reticulum (ER) per se. Its function is as follows. Catalyzes a base-exchange reaction in which the polar head group of phosphatidylethanolamine (PE) or phosphatidylcholine (PC) is replaced by L-serine. Catalyzes the conversion of phosphatatidylethanolamine and does not act on phosphatidylcholine. Can utilize both phosphatidylethanolamine (PE) plasmalogen and diacyl PE as substrate and the latter is six times better utilized, indicating the importance of an ester linkage at the sn-1 position. Although it shows no sn-1 fatty acyl preference, exhibits significant preference towards docosahexaenoic acid (22:6n-3) compared with 18:1 or 20:4 at the sn-2 position. This is Phosphatidylserine synthase 2 (Ptdss2) from Mus musculus (Mouse).